Reading from the N-terminus, the 244-residue chain is Trypsin (244 aa).

The signal sequence occupies residues 1–15 (MKFLVILVLLGAAVA). Residues 16–21 (FEDDDK) constitute a propeptide, activation peptide. A Peptidase S1 domain is found at 22–242 (IVGGFTCAKN…FVTWIQSTIS (221 aa)). 6 disulfide bridges follow: Cys-28–Cys-158, Cys-46–Cys-62, Cys-130–Cys-231, Cys-137–Cys-204, Cys-169–Cys-183, and Cys-194–Cys-218. Residue His-61 is the Charge relay system of the active site. Ca(2+)-binding residues include Glu-73, Asn-75, and Glu-83. The Charge relay system role is filled by Asp-105. The active-site Charge relay system is Ser-198.

The protein belongs to the peptidase S1 family. Requires Ca(2+) as cofactor.

Its subcellular location is the secreted. The protein localises to the extracellular space. It carries out the reaction Preferential cleavage: Arg-|-Xaa, Lys-|-Xaa.. In Xenopus laevis (African clawed frog), this protein is Trypsin.